Reading from the N-terminus, the 952-residue chain is Glycine dehydrogenase (decarboxylating) (952 aa).

At lysine 696 the chain carries N6-(pyridoxal phosphate)lysine.

Belongs to the GcvP family. As to quaternary structure, the glycine cleavage system is composed of four proteins: P, T, L and H. Pyridoxal 5'-phosphate is required as a cofactor.

The catalysed reaction is N(6)-[(R)-lipoyl]-L-lysyl-[glycine-cleavage complex H protein] + glycine + H(+) = N(6)-[(R)-S(8)-aminomethyldihydrolipoyl]-L-lysyl-[glycine-cleavage complex H protein] + CO2. Its function is as follows. The glycine cleavage system catalyzes the degradation of glycine. The P protein binds the alpha-amino group of glycine through its pyridoxal phosphate cofactor; CO(2) is released and the remaining methylamine moiety is then transferred to the lipoamide cofactor of the H protein. The sequence is that of Glycine dehydrogenase (decarboxylating) from Pelagibacter ubique (strain HTCC1062).